Here is a 184-residue protein sequence, read N- to C-terminus: NADH-quinone oxidoreductase subunit B (184 aa).

[4Fe-4S] cluster contacts are provided by Cys-63, Cys-64, Cys-128, and Cys-158.

It belongs to the complex I 20 kDa subunit family. In terms of assembly, NDH-1 is composed of 14 different subunits. Subunits NuoB, C, D, E, F, and G constitute the peripheral sector of the complex. The cofactor is [4Fe-4S] cluster.

It is found in the cell inner membrane. The enzyme catalyses a quinone + NADH + 5 H(+)(in) = a quinol + NAD(+) + 4 H(+)(out). In terms of biological role, NDH-1 shuttles electrons from NADH, via FMN and iron-sulfur (Fe-S) centers, to quinones in the respiratory chain. The immediate electron acceptor for the enzyme in this species is believed to be ubiquinone. Couples the redox reaction to proton translocation (for every two electrons transferred, four hydrogen ions are translocated across the cytoplasmic membrane), and thus conserves the redox energy in a proton gradient. This is NADH-quinone oxidoreductase subunit B from Xanthomonas axonopodis pv. citri (strain 306).